Here is a 198-residue protein sequence, read N- to C-terminus: Probable GTP-binding protein EngB (198 aa).

An EngB-type G domain is found at 22–196; it reads NLSEIAFVGR…WNWIKGQAEL (175 aa). GTP is bound by residues 30–37, 57–61, 75–78, 142–145, and 175–177; these read GRSNVGKS, GKTQT, DVPG, TKAD, and FSA. Ser-37 and Thr-59 together coordinate Mg(2+).

The protein belongs to the TRAFAC class TrmE-Era-EngA-EngB-Septin-like GTPase superfamily. EngB GTPase family. Mg(2+) serves as cofactor.

Functionally, necessary for normal cell division and for the maintenance of normal septation. The sequence is that of Probable GTP-binding protein EngB from Oenococcus oeni (strain ATCC BAA-331 / PSU-1).